We begin with the raw amino-acid sequence, 316 residues long: Rhomboid-related protein 4 (316 aa).

Over 1-21 (MQRRTRGIDTGLLLLLSQVFH) the chain is Cytoplasmic. A helical membrane pass occupies residues 22 to 42 (IGINNIPPVTLATLAVNVWFF). The Extracellular portion of the chain corresponds to 43–103 (LNPWKPLYHS…KLEKRLGSRW (61 aa)). Residues 104–124 (FAYIIATFSLLTGVVYLLLQF) traverse the membrane as a helical segment. The Cytoplasmic segment spans residues 125–137 (ASAELMNQPDFKR). The chain crosses the membrane as a helical span at residues 138–154 (NCAVGFSGVLFALKVLS). Residue S144 is the Nucleophile of the active site. At 155-182 (NHYCPGGFVNILGFPVPNRFACWAELAA) the chain is on the extracellular side. The helical transmembrane segment at 183–203 (IHFCTPGTSFAGHLAGILVGL) threads the bilayer. Residue H195 is part of the active site. Topologically, residues 204–316 (MYTQGPLKKI…RQRLHRFDGQ (113 aa)) are cytoplasmic. The ubiquitin-binding domain (UBD) stretch occupies residues 269–284 (SEEEQLERALRASIWD). The VCP/p97-interacting motif (VIM) stretch occupies residues 301–316 (PEEEMRRQRLHRFDGQ).

The protein belongs to the peptidase S54 family. In terms of assembly, interacts with BIK and STEAP3. Interacts (via C-terminal domain) with VCP. Interacts with ubiquitin and ubiquitinated proteins. As to expression, expressed in intestine, lung, brain, kidney, epididymis and testis.

Its subcellular location is the endoplasmic reticulum membrane. The protein localises to the mitochondrion membrane. The enzyme catalyses Cleaves type-1 transmembrane domains using a catalytic dyad composed of serine and histidine that are contributed by different transmembrane domains.. Its activity is regulated as follows. Inhibited by aprotinin. Intramembrane-cleaving serine protease that cleaves single transmembrane or multi-pass membrane proteins in the hydrophobic plane of the membrane, luminal loops and juxtamembrane regions. Involved in regulated intramembrane proteolysis and the subsequent release of functional polypeptides from their membrane anchors. Functional component of endoplasmic reticulum-associated degradation (ERAD) for misfolded membrane proteins. Required for the degradation process of some specific misfolded endoplasmic reticulum (ER) luminal proteins. Participates in the transfer of misfolded proteins from the ER to the cytosol, where they are destroyed by the proteasome in a ubiquitin-dependent manner. Functions in BIK, MPZ, PKD1, PTCRA, RHO, STEAP3 and TRAC processing. Involved in the regulation of exosomal secretion; inhibits the TSAP6-mediated secretion pathway. Involved in the regulation of apoptosis; modulates BIK-mediated apoptotic activity. Also plays a role in the regulation of spermatogenesis; inhibits apoptotic activity in spermatogonia. This chain is Rhomboid-related protein 4 (Rhbdd1), found in Rattus norvegicus (Rat).